We begin with the raw amino-acid sequence, 283 residues long: Pantothenate synthetase (283 aa).

Position 30-37 (30-37 (MGYLHEGH)) interacts with ATP. Residue histidine 37 is the Proton donor of the active site. Glutamine 61 is a binding site for (R)-pantoate. Glutamine 61 lines the beta-alanine pocket. 147 to 150 (GQKD) serves as a coordination point for ATP. Residue glutamine 153 participates in (R)-pantoate binding. Residues valine 176 and 184–187 (LSSR) contribute to the ATP site.

Belongs to the pantothenate synthetase family. As to quaternary structure, homodimer.

Its subcellular location is the cytoplasm. It carries out the reaction (R)-pantoate + beta-alanine + ATP = (R)-pantothenate + AMP + diphosphate + H(+). The protein operates within cofactor biosynthesis; (R)-pantothenate biosynthesis; (R)-pantothenate from (R)-pantoate and beta-alanine: step 1/1. Its function is as follows. Catalyzes the condensation of pantoate with beta-alanine in an ATP-dependent reaction via a pantoyl-adenylate intermediate. The sequence is that of Pantothenate synthetase from Moorella thermoacetica (strain ATCC 39073 / JCM 9320).